The sequence spans 847 residues: Protein translocase subunit SecA (847 aa).

ATP-binding positions include glutamine 87, 105–109 (GEGKT), and aspartate 495. A disordered region spans residues 828-847 (SSNSPSDARNRPIEHDDNAV). Over residues 835–847 (ARNRPIEHDDNAV) the composition is skewed to basic and acidic residues.

Belongs to the SecA family. In terms of assembly, monomer and homodimer. Part of the essential Sec protein translocation apparatus which comprises SecA, SecYEG and auxiliary proteins SecDF. Other proteins may also be involved.

It localises to the cell membrane. The protein localises to the cytoplasm. The enzyme catalyses ATP + H2O + cellular proteinSide 1 = ADP + phosphate + cellular proteinSide 2.. Functionally, part of the Sec protein translocase complex. Interacts with the SecYEG preprotein conducting channel. Has a central role in coupling the hydrolysis of ATP to the transfer of proteins into and across the cell membrane, serving as an ATP-driven molecular motor driving the stepwise translocation of polypeptide chains across the membrane. The polypeptide is Protein translocase subunit SecA (Tropheryma whipplei (strain TW08/27) (Whipple's bacillus)).